Reading from the N-terminus, the 183-residue chain is TATA box-binding protein-like 1 (183 aa).

It belongs to the TBP family. As to quaternary structure, binds TFIIA and TFIIB. In terms of tissue distribution, present in the brain, heart, liver and gizzard.

It localises to the cytoplasm. Its subcellular location is the nucleus. Part of a specialized transcription system that mediates the transcription of most ribosomal proteins through the 5'-TCT-3' motif which is a core promoter element at these genes. Seems to also mediate the transcription of NF1. Does not bind the TATA box. This chain is TATA box-binding protein-like 1 (TBPL1), found in Gallus gallus (Chicken).